Here is a 758-residue protein sequence, read N- to C-terminus: MADDSLLLNFSLGDNNIIQPETKLKGGTWRDRLSAKKIAKHHAKGPRTAGDEDSAPRAPRNPNRIEVPSSRPTKRQRTDGGDSGKQQSHGHPHSNQPRQFISSLFTKNPEPQKAEEVKEEGHVENAKPTNAPLIDGLDTFTNLGLSPNLAAHLLTKLELKAPTAIQKASISQLLKEEGDAFIQAETGSGKTLAYLLPLVQRIMALSKPGAQTDATGQPIVHRDSGLFAIVLAPTRELCKQISVVLENLLRCAHWIVAGTVIGGEKKKSEKARLRKGLNILVATPGRLADHLDNTQALDVSNVRWLVLDEGDRLMELGFEEEIQGIVKKLDARQRPSRIPGIPARRTTILCSATLKMSVQKLGEISLKDAVHIKADPEDEDEKARRSKAEESAYRVPAQLKQSYAVVAAKLRLVTLTAFFKRTFMRKGSVMKAIIFVSCADSVDFHFEVFTRKQVKEDGGEPSDTDKSEEKPPSSPHGTIAPATAFSNPSNPVTLFRLHGSLPQNVRTSTLGAFAKNKEASVLICTDVASRGLDLPNVDLVVEYDPAFSAEDHLHRIGRTARVGRDGRALIFLQPGCEENYVEVLKRGYRDGGKALTRADANEILKRGFGGNVESGNKDWETKATDWQCEVERWALENPEYLEMARRAFQSHIRAYATHIAAERSMFNIKELHLGHLAKAFALRDRPSKINVPGLRQGKEETKKDFKAERNSAAGKKRKAGGADLADDIPSANNTATAAQKMRAKMKEHMAGANEFNLA.

Disordered stretches follow at residues 28 to 98 (TWRD…NQPR) and 110 to 130 (EPQK…KPTN). Basic residues predominate over residues 35–45 (AKKIAKHHAKG). Positions 84–98 (GKQQSHGHPHSNQPR) are enriched in polar residues. Over residues 110-125 (EPQKAEEVKEEGHVEN) the composition is skewed to basic and acidic residues. Residues 138-167 (DTFTNLGLSPNLAAHLLTKLELKAPTAIQK) carry the Q motif motif. The region spanning 171-372 (SQLLKEEGDA…EISLKDAVHI (202 aa)) is the Helicase ATP-binding domain. 184–191 (AETGSGKT) provides a ligand contact to ATP. The DEAD box signature appears at 308 to 311 (DEGD). One can recognise a Helicase C-terminal domain in the interval 398–620 (QLKQSYAVVA…NVESGNKDWE (223 aa)). 2 stretches are compositionally biased toward basic and acidic residues: residues 455–471 (KEDG…EEKP) and 697–709 (GKEE…KAER). Disordered regions lie at residues 455-483 (KEDG…APAT) and 697-745 (GKEE…RAKM).

This sequence belongs to the DEAD box helicase family. DDX31/DBP7 subfamily.

The protein resides in the nucleus. Its subcellular location is the nucleolus. The enzyme catalyses ATP + H2O = ADP + phosphate + H(+). Its function is as follows. ATP-binding RNA helicase involved in the biogenesis of 60S ribosomal subunits and is required for the normal formation of 25S and 5.8S rRNAs. The polypeptide is ATP-dependent RNA helicase dbp7 (dbp7) (Aspergillus fumigatus (strain ATCC MYA-4609 / CBS 101355 / FGSC A1100 / Af293) (Neosartorya fumigata)).